The chain runs to 480 residues: MDYLPMFARLEGRPVLLVGGGEVALRKARLLLAAGARLTLVSPEIEPEFAEFAGRFTHLVERFTPAHLAGQLLVVAATDNLEVNALVYQSANQLGLFVNVVDDPKRSSFIFPSIIDRSPLMVAVSSGGKAPVLVRLLRERLESLLPRHLGGLTELSGRVRDKAKQVLSSISDRRRFWERAFASNTLAGLIEKQDWQSAETWLNDGLDKAQSEVGEVVLVGAGPGDPGLLTLKALQQIQQAEVVLYDQLVSPEILDLVRRDATLVSVGKKAGAHSVPQEETNRLLVEYARAGNRVVRLKGGDPFMFGCGGEELEVLAAEGIPFSVVPGITAAAGATAYAGIPLTHRDHAQSAVFITGHCQKEGKEPDWQQLAVTQQTLVIYMGLMRSEHIQQQLVSHGRSCTTPIAIIEWGTTARQRVLTGTLAELAVLAQQAVSPSLIVIGEVVSLRKQLAWFGEKSGEKRDVQAGTDMNGCDLKLVNLA.

The segment at 1–202 is precorrin-2 dehydrogenase /sirohydrochlorin ferrochelatase; sequence MDYLPMFARL…QDWQSAETWL (202 aa). Residues 22 to 23 and 43 to 44 contribute to the NAD(+) site; these read EV and PE. Ser126 carries the post-translational modification Phosphoserine. Positions 214–480 are uroporphyrinogen-III C-methyltransferase; the sequence is GEVVLVGAGP…GCDLKLVNLA (267 aa). Pro223 serves as a coordination point for S-adenosyl-L-methionine. Asp246 functions as the Proton acceptor in the catalytic mechanism. The Proton donor role is filled by Lys268. Residues 299 to 301, 329 to 330, Met381, and Gly410 each bind S-adenosyl-L-methionine; these read GGD and TA.

It in the N-terminal section; belongs to the precorrin-2 dehydrogenase / sirohydrochlorin ferrochelatase family. In the C-terminal section; belongs to the precorrin methyltransferase family.

The enzyme catalyses uroporphyrinogen III + 2 S-adenosyl-L-methionine = precorrin-2 + 2 S-adenosyl-L-homocysteine + H(+). The catalysed reaction is precorrin-2 + NAD(+) = sirohydrochlorin + NADH + 2 H(+). It carries out the reaction siroheme + 2 H(+) = sirohydrochlorin + Fe(2+). The protein operates within cofactor biosynthesis; adenosylcobalamin biosynthesis; precorrin-2 from uroporphyrinogen III: step 1/1. It functions in the pathway cofactor biosynthesis; adenosylcobalamin biosynthesis; sirohydrochlorin from precorrin-2: step 1/1. It participates in porphyrin-containing compound metabolism; siroheme biosynthesis; precorrin-2 from uroporphyrinogen III: step 1/1. Its pathway is porphyrin-containing compound metabolism; siroheme biosynthesis; siroheme from sirohydrochlorin: step 1/1. The protein operates within porphyrin-containing compound metabolism; siroheme biosynthesis; sirohydrochlorin from precorrin-2: step 1/1. Multifunctional enzyme that catalyzes the SAM-dependent methylations of uroporphyrinogen III at position C-2 and C-7 to form precorrin-2 via precorrin-1. Then it catalyzes the NAD-dependent ring dehydrogenation of precorrin-2 to yield sirohydrochlorin. Finally, it catalyzes the ferrochelation of sirohydrochlorin to yield siroheme. This is Siroheme synthase 2 from Aeromonas salmonicida (strain A449).